A 151-amino-acid chain; its full sequence is C-C motif chemokine 25 (151 aa).

A signal peptide spans 1–22 (MNLWLLVCLVASLMGAWSTVHT). Disulfide bonds link Cys29-Cys57 and Cys30-Cys73. Residues 94-151 (THSKQHLGSRRNLQDSHLGGQRSNTGMSRLAHSKSKSSRSTRSNKKKTSFLNMANPGP) form a disordered region. The span at 124-141 (AHSKSKSSRSTRSNKKKT) shows a compositional bias: basic residues.

This sequence belongs to the intercrine beta (chemokine CC) family.

It is found in the secreted. Potentially involved in T-cell development. Recombinant protein shows chemotactic activity on thymocytes, macrophages, THP-1 cells, and dendritics cells but is inactive on peripheral blood lymphocytes and neutrophils. Binds to CCR9. Binds to atypical chemokine receptor ACKR4 and mediates the recruitment of beta-arrestin (ARRB1/2) to ACKR4. This Canis lupus familiaris (Dog) protein is C-C motif chemokine 25 (CCL25).